Here is a 532-residue protein sequence, read N- to C-terminus: Probable rhamnogalacturonase B (532 aa).

An N-terminal signal peptide occupies residues 1 to 21 (MRINTLSLFSLVSLVPTLALA). Cys-42 and Cys-68 are oxidised to a cystine. Asp-219 serves as the catalytic Proton donor. Cys-221 and Cys-238 are joined by a disulfide. N-linked (GlcNAc...) asparagine glycosylation occurs at Asn-239. His-294 is an active-site residue. Asn-321 carries an N-linked (GlcNAc...) asparagine glycan. Intrachain disulfides connect Cys-344-Cys-350 and Cys-374-Cys-383. Low complexity-rich tracts occupy residues 466–475 (TVAAATSTPA) and 490–499 (QPSQQSPGQS). Positions 466 to 532 (TVAAATSTPA…HRHHQRHGHH (67 aa)) are disordered. Residues 521–532 (AGHRHHQRHGHH) are compositionally biased toward basic residues.

This sequence belongs to the glycosyl hydrolase 28 family.

Its subcellular location is the secreted. The enzyme catalyses Endohydrolysis of alpha-D-GalA-(1-&gt;2)-alpha-L-Rha glycosidic bond in the rhamnogalacturonan I backbone with initial inversion of anomeric configuration releasing oligosaccharides with beta-D-GalA at the reducing end.. Its function is as follows. Pectinolytic enzymes consist of four classes of enzymes: pectine lyase, polygalacturonase, pectin methylesterase and rhamnogalacturonase. Hydrolyzes alpha-D-galacturonopyranosyl-(1,2)-alpha-L-rhamnopyranosyl linkages in the backbone of the hairy regions of pectins. This chain is Probable rhamnogalacturonase B (rhgB), found in Aspergillus oryzae (strain ATCC 42149 / RIB 40) (Yellow koji mold).